Reading from the N-terminus, the 404-residue chain is Tryptophan synthase beta chain (404 aa).

At lysine 99 the chain carries N6-(pyridoxal phosphate)lysine.

Belongs to the TrpB family. In terms of assembly, tetramer of two alpha and two beta chains. Pyridoxal 5'-phosphate is required as a cofactor.

The catalysed reaction is (1S,2R)-1-C-(indol-3-yl)glycerol 3-phosphate + L-serine = D-glyceraldehyde 3-phosphate + L-tryptophan + H2O. It participates in amino-acid biosynthesis; L-tryptophan biosynthesis; L-tryptophan from chorismate: step 5/5. Its function is as follows. The beta subunit is responsible for the synthesis of L-tryptophan from indole and L-serine. This Rhizobium rhizogenes (strain K84 / ATCC BAA-868) (Agrobacterium radiobacter) protein is Tryptophan synthase beta chain.